The primary structure comprises 585 residues: MTDYFEVHARDGAARIGELRLSDSVTTPAVVDDVLADAGSLWAAERELPDGSDDVLTVLPHRSLPAGSADEVRESFSVAYPDVDFPSAAVVTADTADDFGADAYVLSDAQGFVGHARAFRDNVIEAKENLPADTALVLSGVATPRNVSLLVYAGVDLVDEKLARARGLEGFYLTSDGEYFLEDLDELPCACEACRKPASEFTRADAADHNANALRAELARVRRRVRDGRLRDYVEGQARHDQWLTALFRRFDQQYSFMEQRVPVIRDSELTAASEESIDRVEIQRFADRVTKRYRNRFDNPLVLLPCSAKKPYSESQSHRQFQEAVQYRAHMVSMTSPIGVVPQELELTYPAQHYDSVVTGDWSEDEKSFVAEVLRRYLERNDYPRIIAHLPPGAYTDIVERVADDLDLDVEFTVSEHPTTTESIGNLMRTLDGEPKFTREEREHNVVKALADYQLGPDAGDALFSDVALEMTSRYPKLQVWNDAGVQLATMVPQYGVLSFTLEGAKVWRDSDAPTKTVEIDGFVPHGSVLAPGVVDADEDIRPGDEVVVEGPKAFAIGRAEMGGRELVESTRGIGVEIRHVEER.

The region spanning 516–584 is the PUA domain; that stretch reads TKTVEIDGFV…IGVEIRHVEE (69 aa).

It belongs to the archaeosine synthase type 1 family. As to quaternary structure, homodimer.

The enzyme catalyses 7-cyano-7-carbaguanosine(15) in tRNA + L-glutamine + H2O = archaeosine(15) in tRNA + L-glutamate. It participates in tRNA modification; archaeosine-tRNA biosynthesis. Its function is as follows. Is responsible for the final step in the biosynthesis of archaeosine, a modified nucleoside present in the dihydrouridine loop (D-loop) of archaeal tRNA. Catalyzes the conversion of 7-cyano-7-deazaguanine (preQ0)-modified tRNA to archaeosine-tRNA, transforming a nitrile group to a formamidine group. This Haloferax volcanii (strain ATCC 29605 / DSM 3757 / JCM 8879 / NBRC 14742 / NCIMB 2012 / VKM B-1768 / DS2) (Halobacterium volcanii) protein is Archaeosine synthase.